Consider the following 463-residue polypeptide: Fumarate hydratase class II (463 aa).

Residues 97–99, 128–131, 138–140, and Thr-186 each bind substrate; these read SGT, HPND, and SSN. The active-site Proton donor/acceptor is the His-187. Residue Ser-317 is part of the active site. Residues Ser-318 and 323–325 contribute to the substrate site; that span reads KVN.

Belongs to the class-II fumarase/aspartase family. Fumarase subfamily. In terms of assembly, homotetramer.

Its subcellular location is the cytoplasm. It catalyses the reaction (S)-malate = fumarate + H2O. It functions in the pathway carbohydrate metabolism; tricarboxylic acid cycle; (S)-malate from fumarate: step 1/1. Its function is as follows. Involved in the TCA cycle. Catalyzes the stereospecific interconversion of fumarate to L-malate. The protein is Fumarate hydratase class II of Helicobacter pylori (strain ATCC 700392 / 26695) (Campylobacter pylori).